The chain runs to 60 residues: Putative insect toxin Acra6 (60 aa).

An LCN-type CS-alpha/beta domain is found at 2 to 60 (RDGYIRRKDEFKFKCYVDGKDCDDVCKSEGGSAGYCTALGFLCYCAGLPDDKAWKPTSS). 3 cysteine pairs are disulfide-bonded: Cys16/Cys37, Cys23/Cys44, and Cys27/Cys46.

It belongs to the long (4 C-C) scorpion toxin superfamily. Sodium channel inhibitor family. Beta subfamily. As to expression, expressed by the venom gland.

The protein resides in the secreted. Functionally, depressant insect toxins cause a transient contraction paralysis followed by a slow flaccid paralysis. They bind voltage-independently to sodium channels (Nav) and block action potentials, primarily by depolarizing the axonal membrane and suppressing the sodium current. In Androctonus crassicauda (Arabian fat-tailed scorpion), this protein is Putative insect toxin Acra6.